We begin with the raw amino-acid sequence, 406 residues long: Vacuole membrane protein 1 (406 aa).

Over residues 1 to 20 (MAENGKNCDQRRVAMNKEQH) the composition is skewed to basic and acidic residues. The segment at 1-36 (MAENGKNCDQRRVAMNKEQHNGNFTDPSSVNEKKRR) is disordered. The residue at position 2 (Ala-2) is an N-acetylalanine. The Cytoplasmic segment spans residues 2–43 (AENGKNCDQRRVAMNKEQHNGNFTDPSSVNEKKRREREERQN). Residues 21 to 30 (NGNFTDPSSV) are compositionally biased toward polar residues. Residues 44 to 64 (IVLWRQPLITLQYFSLEILVI) form a helical membrane-spanning segment. The Extracellular portion of the chain corresponds to 65–77 (LKEWTSKLWHRQS). Residues 78–98 (IVVSFLLLLAVLIATYYVEGA) traverse the membrane as a helical segment. At 99–109 (HQQYVQRIEKQ) the chain is on the cytoplasmic side. Residues 110-130 (FLLYAYWIGLGILSSVGLGTG) form a helical membrane-spanning segment. Residues 131–250 (LHTFLLYLGP…ASRAKLAVQK (120 aa)) lie on the Extracellular side of the membrane. The interval 173-316 (GTEGTISLWS…FVIITFSKHI (144 aa)) is VTT domain. The chain crosses the membrane as a helical span at residues 251 to 271 (LVQKVGFFGILACASIPNPLF). The Cytoplasmic segment spans residues 272–273 (DL). A helical transmembrane segment spans residues 274-294 (AGITCGHFLVPFWTFFGATLI). Residues 295-305 (GKAIIKMHIQK) lie on the Extracellular side of the membrane. Residues 306–326 (IFVIITFSKHIVEQMVAFIGA) form a helical membrane-spanning segment. Residues 327–363 (VPGIGPSLQKPFQEYLEAQRQKLHHKSEMGTPQGENW) are Cytoplasmic-facing. Residues 364 to 384 (LSWMFEKLVVVMVCYFILSII) traverse the membrane as a helical segment. At 385–406 (NSMAQSYAKRIQQRLNSEEKTK) the chain is on the extracellular side.

Belongs to the VMP1 family. Interacts with BECN1. Interacts with TJP1. Interacts with TP53INP2. Interacts with TMEM41B. Interacts with ATP2A2, PLN and SLN; competes with PLN and SLN to prevent them from forming an inhibitory complex with ATP2A2. Interacts with ATG2A.

It localises to the endoplasmic reticulum-Golgi intermediate compartment membrane. Its subcellular location is the cell membrane. The protein resides in the vacuole membrane. The protein localises to the endoplasmic reticulum membrane. It catalyses the reaction a 1,2-diacyl-sn-glycero-3-phospho-L-serine(in) = a 1,2-diacyl-sn-glycero-3-phospho-L-serine(out). It carries out the reaction cholesterol(in) = cholesterol(out). The enzyme catalyses a 1,2-diacyl-sn-glycero-3-phosphocholine(in) = a 1,2-diacyl-sn-glycero-3-phosphocholine(out). The catalysed reaction is a 1,2-diacyl-sn-glycero-3-phosphoethanolamine(in) = a 1,2-diacyl-sn-glycero-3-phosphoethanolamine(out). Functionally, phospholipid scramblase involved in lipid homeostasis and membrane dynamics processes. Has phospholipid scramblase activity toward cholesterol and phosphatidylserine, as well as phosphatidylethanolamine and phosphatidylcholine. Required for autophagosome formation: participates in early stages of autophagosome biogenesis at the endoplasmic reticulum (ER) membrane by reequilibrating the leaflets of the ER as lipids are extracted by ATG2 (ATG2A or ATG2B) to mediate autophagosome assembly. Regulates ATP2A2 activity to control ER-isolation membrane contacts for autophagosome formation. In addition to autophagy, involved in other processes in which phospholipid scramblase activity is required. Modulates ER contacts with lipid droplets, mitochondria and endosomes. Plays an essential role in formation of cell junctions. Upon stress such as bacterial and viral infection, promotes formation of cytoplasmic vacuoles followed by cell death. Involved in the cytoplasmic vacuolization of acinar cells during the early stage of acute pancreatitis. This Pongo abelii (Sumatran orangutan) protein is Vacuole membrane protein 1.